The following is a 418-amino-acid chain: Thyroid hormone receptor alpha (418 aa).

Positions 1-41 (MDQNLSGLDCLSEPDEKRWPDGKRKRKNSQCMGKSGMSGDS) are disordered. The modulating stretch occupies residues 1 to 60 (MDQNLSGLDCLSEPDEKRWPDGKRKRKNSQCMGKSGMSGDSSVSLLSAGYIPSYLTKDEP). Residues C61, C64, C78, C81, C99, C105, C115, and C118 each contribute to the Zn(2+) site. 2 consecutive NR C4-type zinc fingers follow at residues 61–81 (CVVCSDKATGYHYRCITCEGC) and 99–123 (CKYDGCCIIDKITRNQCQLCRFKKC). Positions 61–135 (CVVCSDKATG…VGMAMDLVLD (75 aa)) form a DNA-binding region, nuclear receptor. An NR LBD domain is found at 171 to 415 (EEWELIRIVT…PPLFLEVFED (245 aa)). 2 residues coordinate 3,3',5-triiodo-L-thyronine: R236 and S285.

It belongs to the nuclear hormone receptor family. NR1 subfamily. In terms of tissue distribution, highest level of expression in erythrocytes. Also expressed in liver, tail, eye, muscle and skin.

The protein resides in the nucleus. Its function is as follows. Nuclear hormone receptor that can act as a repressor or activator of transcription. High affinity receptor for thyroid hormones, including triiodothyronine and thyroxine. The chain is Thyroid hormone receptor alpha (thra) from Aquarana catesbeiana (American bullfrog).